Here is a 280-residue protein sequence, read N- to C-terminus: Thioredoxin-related transmembrane protein 1 (280 aa).

The signal sequence occupies residues 1 to 26 (MAPSGSLAVPLAVLVLLLWGAPWTHG). Residues 27–132 (RRSNVRVITD…FINFISDKEW (106 aa)) enclose the Thioredoxin domain. Residues 27-180 (RRSNVRVITD…EDLGLPVWGS (154 aa)) are Extracellular-facing. Active-site nucleophile residues include Cys-56 and Cys-59. Cys-56 and Cys-59 form a disulfide bridge. A helical transmembrane segment spans residues 181–203 (YTVFALATLFSGLLLGLCMIFVA). Residues 204–280 (DCLCPSKRRR…LGPSLATDKS (77 aa)) are Cytoplasmic-facing. Residues Cys-205 and Cys-207 are each lipidated (S-palmitoyl cysteine). The disordered stretch occupies residues 218–280 (PYPSKKLLSE…LGPSLATDKS (63 aa)). Phosphoserine occurs at positions 228, 247, 270, 274, and 280. Acidic residues predominate over residues 237-252 (EEQEADEEDVSEEEAE).

In terms of assembly, interacts with ATP2A2. Post-translationally, palmitoylated; palmitoylation is required for localization to mitochondria-associated endoplasmic reticulum membrane (MAM). In terms of tissue distribution, ubiquitous. Highly expressed in kidney, liver, placenta and lung.

Its subcellular location is the endoplasmic reticulum membrane. The protein resides in the mitochondrion membrane. It is found in the secreted. The enzyme catalyses Catalyzes the rearrangement of -S-S- bonds in proteins.. Functionally, thiredoxin domain-containing protein that participates in various redox reactions through the reversible oxidation of its active center dithiol to a disulfide and catalyze dithiol-disulfide exchange reactions. Acts as a key inhibitor of the alternative triglyceride biosynthesis pathway by inhibiting the activity of TMEM68/DIESL at the endoplasmic reticulum, thereby restricting accumulation of triacylglycerol. The alternative triglyceride biosynthesis pathway mediates formation of triacylglycerol from diacylglycerol and membrane phospholipids. Acts as a protein disulfide isomerase by catalyzing formation or reduction of disulfide bonds. Specifically mediates formation of disulfide bonds of transmembrane proteins at the endoplasmic reticulum membrane. Involved in endoplasmic reticulum-associated degradation (ERAD) via its protein disulfide isomerase activity by acting on folding-defective polypeptides at the endoplasmic reticulum membrane. Acts as a negative regulator of platelet aggregation following secretion in the extracellular space. Acts as a regulator of endoplasmic reticulum-mitochondria contact sites via its ability to regulate redox signals. Regulates endoplasmic reticulum-mitochondria Ca(2+) flux. The sequence is that of Thioredoxin-related transmembrane protein 1 from Homo sapiens (Human).